We begin with the raw amino-acid sequence, 149 residues long: Transcriptional repressor NrdR (149 aa).

The segment at 3–34 (CPFCSAVDTKVIDSRLVGDGSQVRRRRQCLVC) is a zinc-finger region. The ATP-cone domain maps to 49–139 (PRVVKSNGVR…VYRSFEDVRE (91 aa)).

This sequence belongs to the NrdR family. Zn(2+) is required as a cofactor.

In terms of biological role, negatively regulates transcription of bacterial ribonucleotide reductase nrd genes and operons by binding to NrdR-boxes. In Edwardsiella ictaluri (strain 93-146), this protein is Transcriptional repressor NrdR.